A 265-amino-acid polypeptide reads, in one-letter code: Hydroxyacylglutathione hydrolase (265 aa).

7 residues coordinate Zn(2+): H53, H55, D57, H58, H109, D126, and H164.

Belongs to the metallo-beta-lactamase superfamily. Glyoxalase II family. As to quaternary structure, monomer. Zn(2+) is required as a cofactor.

The enzyme catalyses an S-(2-hydroxyacyl)glutathione + H2O = a 2-hydroxy carboxylate + glutathione + H(+). It functions in the pathway secondary metabolite metabolism; methylglyoxal degradation; (R)-lactate from methylglyoxal: step 2/2. In terms of biological role, thiolesterase that catalyzes the hydrolysis of S-D-lactoyl-glutathione to form glutathione and D-lactic acid. The sequence is that of Hydroxyacylglutathione hydrolase from Dechloromonas aromatica (strain RCB).